The following is a 366-amino-acid chain: Isocitrate dehydrogenase [NAD] subunit alpha, mitochondrial (366 aa).

The transit peptide at 1 to 27 directs the protein to the mitochondrion; the sequence is MAGPAWISKVSRLLGAFHNPKQVTRGF. At Lys-77 the chain carries N6-succinyllysine. Position 101 is a phosphothreonine (Thr-101). Residues Arg-115, Arg-125, and Arg-146 each contribute to the substrate site. Lys-223 carries the post-translational modification N6-acetyllysine. Asp-233, Asp-257, and Asp-261 together coordinate Mg(2+). Lys-343 carries the N6-acetyllysine; alternate modification. An N6-succinyllysine; alternate modification is found at Lys-343. Lys-350 bears the N6-succinyllysine mark.

It belongs to the isocitrate and isopropylmalate dehydrogenases family. As to quaternary structure, heterooligomer of subunits alpha (IDH3A), beta (IDH3B), and gamma (IDH3G) in the apparent ratio of 2:1:1. The heterodimer containing one IDH3A and one IDH3B subunit and the heterodimer containing one IDH3A and one IDH3G subunit assemble into a heterotetramer (which contains two subunits of IDH3A, one of IDH3B and one of IDH3G) and further into the heterooctamer. Mg(2+) serves as cofactor. Requires Mn(2+) as cofactor.

The protein resides in the mitochondrion. The enzyme catalyses D-threo-isocitrate + NAD(+) = 2-oxoglutarate + CO2 + NADH. With respect to regulation, the heterotetramer and the heterodimer composed of IDH3A and IDH3G subunits can be allosterically activated by citrate (CIT) or/and ADP, and the two activators can act independently or synergistically. The heterodimer composed of IDH3A and IDH3B subunits cannot be allosterically regulated and the allosteric regulation of the heterotetramer is through the IDH3G subunit and not the IDH3B subunit. The IDH3G subunit contains the allosteric site which consists of a CIT-binding site and an ADP-binding site, and the binding of CIT and ADP causes conformational changes at the allosteric site which are transmitted to the active site in the catalytic subunit (IDH3A) through a cascade of conformational changes at the heterodimer interface, leading to stabilization of the isocitrate-binding at the active site and thus activation of the enzyme. ATP can activate the heterotetramer and the heterodimer composed of IDH3A and IDH3G subunits at low concentrations but inhibits their activities at high concentrations, whereas ATP exhibits only inhibitory effect on the heterodimer composed of IDH3A and IDH3B subunits. Its function is as follows. Catalytic subunit of the enzyme which catalyzes the decarboxylation of isocitrate (ICT) into alpha-ketoglutarate. The heterodimer composed of the alpha (IDH3A) and beta (IDH3B) subunits and the heterodimer composed of the alpha (IDH3A) and gamma (IDH3G) subunits, have considerable basal activity but the full activity of the heterotetramer (containing two subunits of IDH3A, one of IDH3B and one of IDH3G) requires the assembly and cooperative function of both heterodimers. In Homo sapiens (Human), this protein is Isocitrate dehydrogenase [NAD] subunit alpha, mitochondrial.